The sequence spans 233 residues: Orotidine 5'-phosphate decarboxylase (233 aa).

Residues aspartate 13, lysine 35, 62–71 (DLKFHDIPNT), threonine 122, arginine 182, glutamine 191, glycine 211, and arginine 212 each bind substrate. The active-site Proton donor is lysine 64.

It belongs to the OMP decarboxylase family. Type 1 subfamily. In terms of assembly, homodimer.

It catalyses the reaction orotidine 5'-phosphate + H(+) = UMP + CO2. Its pathway is pyrimidine metabolism; UMP biosynthesis via de novo pathway; UMP from orotate: step 2/2. Catalyzes the decarboxylation of orotidine 5'-monophosphate (OMP) to uridine 5'-monophosphate (UMP). The sequence is that of Orotidine 5'-phosphate decarboxylase from Pseudomonas putida (strain GB-1).